Consider the following 104-residue polypeptide: Type VII secretion system extracellular protein B (104 aa).

Belongs to the WXG100 family. Homodimer. When mixed with EsxA does not form heterodimers.

It localises to the secreted. In terms of biological role, virulence factor that is important for the establishment of infection in the host. EsxB is required for EsxA synthesis as well as secretion. Mediates together with EsxA the release of S.aureus from the host cell. Also inhibits host cytokine production and thus modulates dendritic cell-mediated immunity. This chain is Type VII secretion system extracellular protein B, found in Staphylococcus aureus (strain MSSA476).